Here is a 152-residue protein sequence, read N- to C-terminus: Transcription elongation factor Spt5 (152 aa).

In terms of domain architecture, KOW spans 94 to 124 (PGDLVEVIAGPFKGQKAKVVKIDESKDEVVV).

It belongs to the archaeal Spt5 family. Heterodimer composed of Spt4 and Spt5. Interacts with RNA polymerase (RNAP) independently of nucleic acids. Forms a homodimer in solution.

Functionally, stimulates transcription elongation. This Pyrococcus furiosus (strain ATCC 43587 / DSM 3638 / JCM 8422 / Vc1) protein is Transcription elongation factor Spt5.